Reading from the N-terminus, the 265-residue chain is (-)-isopiperitenol/(-)-carveol dehydrogenase, mitochondrial (265 aa).

The transit peptide at 1-30 (MASVKKLAGKVAIVTGGASGIGEVTARLFA) directs the protein to the mitochondrion. 13–38 (IVTGGASGIGEVTARLFAERGARAVV) contributes to the NAD(+) binding site. S147 is a substrate binding site. The active-site Proton acceptor is Y160.

Belongs to the short-chain dehydrogenases/reductases (SDR) family. In terms of assembly, homodimer and homotetramer. In terms of tissue distribution, peltate glandular trichomes.

It localises to the mitochondrion. It carries out the reaction (1S,6R)-isopiperitenol + NAD(+) = (6R)-isopiperitenone + NADH + H(+). It catalyses the reaction (1S,5R)-carveol + NADP(+) = (R)-carvone + NADPH + H(+). Its function is as follows. Involved in the biosynthesis of menthol and related monoterpenes in leaves. Can use (-)-trans-carveol and, with a lower relative velocity, (-)-trans-isopiperitenol, (+)-neomenthol, (+)-neoisomenthol and (-)-cis-isopiperitenol as substrates, but not (-)-cis-carvenol, (-)-menthol, (+)-isomenthol, 7-hydroxy-limonene, (-)-isopiperitenone or (-)-carvone. This Mentha piperita (Peppermint) protein is (-)-isopiperitenol/(-)-carveol dehydrogenase, mitochondrial.